The primary structure comprises 444 residues: Phosphoglucosamine mutase (444 aa).

The Phosphoserine intermediate role is filled by S102. Mg(2+) contacts are provided by S102, D241, D243, and D245. Phosphoserine is present on S102.

This sequence belongs to the phosphohexose mutase family. The cofactor is Mg(2+). In terms of processing, activated by phosphorylation.

It carries out the reaction alpha-D-glucosamine 1-phosphate = D-glucosamine 6-phosphate. Functionally, catalyzes the conversion of glucosamine-6-phosphate to glucosamine-1-phosphate. This is Phosphoglucosamine mutase from Paracidovorax citrulli (strain AAC00-1) (Acidovorax citrulli).